The chain runs to 337 residues: Cytoskeleton protein RodZ (337 aa).

The Cytoplasmic portion of the chain corresponds to 1–111 (MNTEATHDQN…LGKRRKKRDG (111 aa)). An HTH cro/C1-type domain is found at 19 to 71 (LRNAREQLGLSQQAVAERLCLKVSTVRDIEEDKAPADLASTFLRGYIRSYARL). The H-T-H motif DNA-binding region spans 30 to 49 (QQAVAERLCLKVSTVRDIEE). A helical; Signal-anchor for type II membrane protein membrane pass occupies residues 112 to 132 (WLMTFTWLVLFVVVGLTGAWW). Residues 133-337 (WQNHKAQQEE…TLNAEQSPAQ (205 aa)) lie on the Periplasmic side of the membrane. The tract at residues 155-220 (NAGGDSAQSV…QNAVVAPSQA (66 aa)) is disordered. Residues 160–192 (SAQSVPLDTSEAASQDSTPAPTAPVDSTATNAV) are compositionally biased toward polar residues. The segment covering 193-217 (PQTPDASATTTAPAADAQQNAVVAP) has biased composition (low complexity).

This sequence belongs to the RodZ family.

Its subcellular location is the cell inner membrane. In terms of biological role, cytoskeletal protein that is involved in cell-shape control through regulation of the length of the long axis. The protein is Cytoskeleton protein RodZ of Citrobacter koseri (strain ATCC BAA-895 / CDC 4225-83 / SGSC4696).